A 130-amino-acid chain; its full sequence is Phosphoribosyl-AMP cyclohydrolase (130 aa).

D74 is a binding site for Mg(2+). Position 75 (C75) interacts with Zn(2+). 2 residues coordinate Mg(2+): D76 and D78. Residues C91 and C98 each coordinate Zn(2+).

Belongs to the PRA-CH family. Homodimer. The cofactor is Mg(2+). Zn(2+) is required as a cofactor.

The protein resides in the cytoplasm. It catalyses the reaction 1-(5-phospho-beta-D-ribosyl)-5'-AMP + H2O = 1-(5-phospho-beta-D-ribosyl)-5-[(5-phospho-beta-D-ribosylamino)methylideneamino]imidazole-4-carboxamide. The protein operates within amino-acid biosynthesis; L-histidine biosynthesis; L-histidine from 5-phospho-alpha-D-ribose 1-diphosphate: step 3/9. Functionally, catalyzes the hydrolysis of the adenine ring of phosphoribosyl-AMP. In Bradyrhizobium sp. (strain ORS 278), this protein is Phosphoribosyl-AMP cyclohydrolase.